A 290-amino-acid chain; its full sequence is MDKIIKSIAQSGAFRAYVLDSTETVALAQEKHNTLSSSTVALGRTLIANQILAANQKGDSKITVKVIGDSSFGHIISVADTKGHVKGYIQNTGVDIKKTATGEVLVGPFMGNGHFVTIIDYGTGNPYTSTTPLITGEIGEDFAYYLTESEQTPSAIGLNVLLDENDKVKVAGGFMVQVLPGASEEEIARYEKRLQEMPAISHLLASKNHVEALLEAIYGDEPYKRLSEEPLSFQCDCSRERFEAALMTLPKADLQAMIDEDKGAEIVCQFCGTKYQFNESDLEALINDKA.

2 disulfides stabilise this stretch: Cys235–Cys237 and Cys268–Cys271.

The protein belongs to the HSP33 family. In terms of processing, under oxidizing conditions two disulfide bonds are formed involving the reactive cysteines. Under reducing conditions zinc is bound to the reactive cysteines and the protein is inactive.

Its subcellular location is the cytoplasm. Functionally, redox regulated molecular chaperone. Protects both thermally unfolding and oxidatively damaged proteins from irreversible aggregation. Plays an important role in the bacterial defense system toward oxidative stress. This chain is 33 kDa chaperonin, found in Streptococcus pyogenes serotype M3 (strain ATCC BAA-595 / MGAS315).